A 109-amino-acid chain; its full sequence is Putative double-stranded DNA mimic protein YciU (109 aa).

It belongs to the putative dsDNA mimic protein family.

Functionally, may act as a double-stranded DNA (dsDNA) mimic. Probably regulates the activity of a dsDNA-binding protein. In Shigella boydii serotype 18 (strain CDC 3083-94 / BS512), this protein is Putative double-stranded DNA mimic protein YciU.